The chain runs to 223 residues: Ribose-5-phosphate isomerase A (223 aa).

Substrate-binding positions include 32-35 (TGST), 85-88 (DGAD), and 98-101 (KGGG). The active-site Proton acceptor is the Glu-107. Lys-125 serves as a coordination point for substrate.

The protein belongs to the ribose 5-phosphate isomerase family. As to quaternary structure, homodimer.

It carries out the reaction aldehydo-D-ribose 5-phosphate = D-ribulose 5-phosphate. It functions in the pathway carbohydrate degradation; pentose phosphate pathway; D-ribose 5-phosphate from D-ribulose 5-phosphate (non-oxidative stage): step 1/1. Functionally, catalyzes the reversible conversion of ribose-5-phosphate to ribulose 5-phosphate. This is Ribose-5-phosphate isomerase A from Pseudomonas syringae pv. tomato (strain ATCC BAA-871 / DC3000).